Consider the following 129-residue polypeptide: uncharacterized protein (129 aa).

This is an uncharacterized protein from Bacillus subtilis (strain 168).